An 852-amino-acid polypeptide reads, in one-letter code: Lon protease homolog 2, peroxisomal (852 aa).

Serine 2 is modified (N-acetylserine). The region spanning 13-222 (LPLLLTHEGV…MTIPLLVRQI (210 aa)) is the Lon N-terminal domain. 375–382 (GPPGVGKT) contacts ATP. The Lon proteolytic domain occupies 651-837 (LSQPGVAIGL…DEVLNAAFDG (187 aa)). Residues serine 743 and lysine 786 contribute to the active site. The short motif at 850–852 (SKL) is the Microbody targeting signal element.

This sequence belongs to the peptidase S16 family. Interacts with PEX5. Interacts with TYSND1. May interact with enzymes involved in beta-oxidation of fatty acids, including ACOX1/AOX.

The protein localises to the peroxisome matrix. The enzyme catalyses Hydrolysis of proteins in presence of ATP.. ATP-dependent serine protease that mediates the selective degradation of misfolded and unassembled polypeptides in the peroxisomal matrix. Necessary for type 2 peroxisome targeting signal (PTS2)-containing protein processing and facilitates peroxisome matrix protein import. May indirectly regulate peroxisomal fatty acid beta-oxidation through degradation of the self-processed forms of TYSND1. In Bos taurus (Bovine), this protein is Lon protease homolog 2, peroxisomal.